The sequence spans 137 residues: Protein shisa-5 (137 aa).

A helical transmembrane segment spans residues 3–23 (FGATLAVGLTIFVLSVVTIII).

This sequence belongs to the shisa family. Interacts with PDCD6; PDCD6 can stabilize SHISA5.

The protein resides in the endoplasmic reticulum membrane. Its subcellular location is the nucleus membrane. Can induce apoptosis in a caspase-dependent manner and plays a role in p53/TP53-dependent apoptosis. This Pongo abelii (Sumatran orangutan) protein is Protein shisa-5 (SHISA5).